The sequence spans 238 residues: Ribonuclease PH (238 aa).

Residues arginine 86 and 124–126 contribute to the phosphate site; that span reads GTR.

Belongs to the RNase PH family. As to quaternary structure, homohexameric ring arranged as a trimer of dimers.

It carries out the reaction tRNA(n+1) + phosphate = tRNA(n) + a ribonucleoside 5'-diphosphate. Functionally, phosphorolytic 3'-5' exoribonuclease that plays an important role in tRNA 3'-end maturation. Removes nucleotide residues following the 3'-CCA terminus of tRNAs; can also add nucleotides to the ends of RNA molecules by using nucleoside diphosphates as substrates, but this may not be physiologically important. Probably plays a role in initiation of 16S rRNA degradation (leading to ribosome degradation) during starvation. The sequence is that of Ribonuclease PH from Rhizobium rhizogenes (strain K84 / ATCC BAA-868) (Agrobacterium radiobacter).